The sequence spans 194 residues: Anaphase-promoting complex subunit CDC26 (194 aa).

Residues 47-194 form a disordered region; the sequence is EPMDQSEPPR…PSSNTRSHRH (148 aa). Polar residues-rich tracts occupy residues 79–94 and 102–112; these read GECTRTSIAPTLTSAR and LTLSTPVNPVS. Composition is skewed to low complexity over residues 154–166 and 174–194; these read DESPTPSDSPESP and TPGNPTSTSGGPSSNTRSHRH.

The protein belongs to the CDC26 family. In terms of assembly, the APC/C complex is probably composed of at least 12 subunits: apc-2, apc-10, apc-11, cdc-26, emb-1, emb-27, emb-30, mat-1, mat-2, mat-3, such-1 and gfi-3.

It is found in the nucleus. It functions in the pathway protein modification; protein ubiquitination. Probable component of the anaphase promoting complex/cyclosome (APC/C), a cell cycle-regulated E3 ubiquitin ligase that controls progression through mitosis and the G1 phase of the cell cycle. The APC/C complex acts by mediating ubiquitination and subsequent degradation of target proteins. Developmental role in early embryogenesis and the metaphase to anaphase transition in meiosis and mitosis. Required for embryonic anterior-posterior axis formation. In Caenorhabditis elegans, this protein is Anaphase-promoting complex subunit CDC26.